Reading from the N-terminus, the 113-residue chain is Nucleoid-associated protein RHA1_ro04210 (113 aa).

Belongs to the YbaB/EbfC family. As to quaternary structure, homodimer.

The protein localises to the cytoplasm. It is found in the nucleoid. Its function is as follows. Binds to DNA and alters its conformation. May be involved in regulation of gene expression, nucleoid organization and DNA protection. The chain is Nucleoid-associated protein RHA1_ro04210 from Rhodococcus jostii (strain RHA1).